Here is a 219-residue protein sequence, read N- to C-terminus: Guanylate kinase (219 aa).

Residues 15–194 form the Guanylate kinase-like domain; the sequence is GLMFVLSSPS…AFESVKAILR (180 aa). Residue 22 to 29 participates in ATP binding; it reads SPSGAGKT.

This sequence belongs to the guanylate kinase family.

Its subcellular location is the cytoplasm. It carries out the reaction GMP + ATP = GDP + ADP. Its function is as follows. Essential for recycling GMP and indirectly, cGMP. The polypeptide is Guanylate kinase (Rhodopseudomonas palustris (strain BisB5)).